A 676-amino-acid chain; its full sequence is MRFEDIGISKVDKVCLVDRLGCQENLVGTVHVTTTHIIFRAENGSKELWLATGLISSVEKGTLTAAGCMLVIRCKHFQVITLLISRDKSCQDLYETLQRAAKPVSVNVTELLAFENREPVEDVRGWRRLDWNSEMTRQGITKSQWTESNINEGYTICDTYPNKLWFPTAASTSVLLGSCKFRSRGRLPVLTYFHQQTEAALCRCAQPLTGFSARCVEDEKLMELVGKANTNSDNLFLVDTRPRVNAMVNKVQGKGFEDERNYSNMRFHFFDIENIHVMRASQARLLDAVTKCRDVTEYWKTLEASGWLKHVRSVVECSLFLAESISRGTSCVVHCSDGWDRTSQVVALCQLLLDPYYRTIHGFQVLIEKDWLGFGHKFDDRCGHVGALNDEAGKEVSPIFTQWLDCIWQIMQQKPRAFQFNERYLIEMHEHVYSCQFGTFIGNCDKDRRDLNLSKRTKSLWTWMDARHDDYMNPFYSPTAHVALLDLDTRAARFTVWTAMYNRFDNGLQPRERLEDLTMAAMEHVGVLESHVAQLRTRLAELKTQQNQQITSTNTPTNMVDSGMSSATDDLKNLSLSHPLDPLSSTLPILERATSQESGVMDSSLYYPDEALTKYSLKWQPLRGADRCSNPACRGEFSSTIERRIHCHLCGMIFCRRCLKVSADERERVCDKCKTD.

The 377-residue stretch at 125–501 folds into the Myotubularin phosphatase domain; that stretch reads GWRRLDWNSE…ARFTVWTAMY (377 aa). A 1,2-diacyl-sn-glycero-3-phospho-(1D-myo-inositol-3,5-bisphosphate) is bound by residues N249, N274, and I275. A 1,2-diacyl-sn-glycero-3-phospho-(1D-myo-inositol-3-phosphate)-binding residues include N249, N274, and I275. Substrate is bound by residues 249-252, 274-275, and 335-341; these read NKVQ, NI, and CSDGWDR. Residue C335 is the Phosphocysteine intermediate of the active site. A 1,2-diacyl-sn-glycero-3-phospho-(1D-myo-inositol-3,5-bisphosphate) contacts are provided by S336, D337, G338, W339, D340, R341, K377, and R381. The a 1,2-diacyl-sn-glycero-3-phospho-(1D-myo-inositol-3-phosphate) site is built by S336, D337, G338, W339, D340, and R341. R381 is a binding site for a 1,2-diacyl-sn-glycero-3-phospho-(1D-myo-inositol-3-phosphate). R381 serves as a coordination point for substrate. Residues 618-675 form an FYVE-type zinc finger; sequence KWQPLRGADRCSNPACRGEFSSTIERRIHCHLCGMIFCRRCLKVSADERERVCDKCKT.

It belongs to the protein-tyrosine phosphatase family. Non-receptor class myotubularin subfamily. In terms of assembly, heterodimer with mtm-9. As to expression, expressed in intestinal cells. Expressed in head neurons, pre-anal ganglion, hypodermal cells, anal depressor muscle and non-neuronal cells in the tail.

The protein localises to the cytoplasm. It is found in the membrane. It localises to the apical cell membrane. The catalysed reaction is a 1,2-diacyl-sn-glycero-3-phospho-(1D-myo-inositol-3,5-bisphosphate) + H2O = a 1,2-diacyl-sn-glycero-3-phospho-(1D-myo-inositol-5-phosphate) + phosphate. The enzyme catalyses a 1,2-diacyl-sn-glycero-3-phospho-(1D-myo-inositol-3-phosphate) + H2O = a 1,2-diacyl-sn-glycero-3-phospho-(1D-myo-inositol) + phosphate. It catalyses the reaction 1,2-dioctanoyl-sn-glycero-3-phospho-(1D-myo-inositol-3,5-bisphosphate) + H2O = 1,2-dioctanoyl-sn-glycero-3-phospho-(1D-myo-inositol-5-phosphate) + phosphate. It carries out the reaction 1,2-dioctanoyl-sn-glycero-3-phospho-(1-D-myo-inositol-3-phosphate) + H2O = 1,2-dioctanoyl-sn-glycero-3-phospho-(1D-myo-inositol) + phosphate. In terms of biological role, probable lipid phosphatase that specifically dephosphorylates the D-3 position of phosphatidylinositol 3-phosphate and phosphatidylinositol 3,5-bisphosphate, generating phosphatidylinositol and phosphatidylinositol 5-phosphate. In association with mtm-9, plays a role in endosome trafficking probably by regulating phosphatidylinositol-3-phosphate levels. Regulates fluid phase endocytosis in coelomocytes. Controls the endosomal localization of sorting nexin snx-3 and the levels of sorting receptor mig-14. By regulating the retrograde transport of mig-14, may be involved in the secretion of Wnt ligands such as egl-20. Regulates posterior migration of QL neuroblast descendants and the anterior migration of QR neuroblast descendants and HSN neurons during larval development. Involved in the formation of correct synapse number in DA9 motor neurons probably in part by regulating the secretion of Wnt ligand egl-20. The polypeptide is Phosphatidylinositol-3,5-bisphosphate 3-phosphatase MTMR6 (Caenorhabditis elegans).